The primary structure comprises 229 residues: DNA mismatch repair protein MutH (229 aa).

The protein belongs to the MutH family.

Its subcellular location is the cytoplasm. In terms of biological role, sequence-specific endonuclease that cleaves unmethylated GATC sequences. It is involved in DNA mismatch repair. The chain is DNA mismatch repair protein MutH from Escherichia coli (strain SMS-3-5 / SECEC).